The primary structure comprises 563 residues: Ribulokinase (563 aa).

It belongs to the ribulokinase family.

It carries out the reaction D-ribulose + ATP = D-ribulose 5-phosphate + ADP + H(+). The catalysed reaction is L-ribulose + ATP = L-ribulose 5-phosphate + ADP + H(+). The protein operates within carbohydrate degradation; L-arabinose degradation via L-ribulose; D-xylulose 5-phosphate from L-arabinose (bacterial route): step 2/3. The sequence is that of Ribulokinase from Halalkalibacterium halodurans (strain ATCC BAA-125 / DSM 18197 / FERM 7344 / JCM 9153 / C-125) (Bacillus halodurans).